We begin with the raw amino-acid sequence, 356 residues long: CMP-sialic acid transporter 2 (356 aa).

Residues 1–24 are compositionally biased toward basic and acidic residues; the sequence is MEYRRVKDQESYDVVSQKDIESPG. Residues 1 to 43 form a disordered region; it reads MEYRRVKDQESYDVVSQKDIESPGERSLSSTSATSSLSTAGAS. Residues 1 to 52 lie on the Cytoplasmic side of the membrane; sequence MEYRRVKDQESYDVVSQKDIESPGERSLSSTSATSSLSTAGASKGNNSWKLK. The segment covering 27–43 has biased composition (low complexity); the sequence is SLSSTSATSSLSTAGAS. A helical transmembrane segment spans residues 53–73; that stretch reads SIVTLALTLLTSSQAILIVWS. Topologically, residues 74–82 are lumenal; the sequence is KRAGKYEYS. Residues 83–103 traverse the membrane as a helical segment; the sequence is VTTANFSVEALKCLLSLIALY. The Cytoplasmic segment spans residues 104–125; that stretch reads RTWNSQGVTEDNRLSTSFDEVS. Residues 126–146 form a helical membrane-spanning segment; the sequence is VYPIPAILYMVKNLLQYYIFA. The Lumenal segment spans residues 147 to 149; that stretch reads YVD. A helical transmembrane segment spans residues 150–172; the sequence is APAYQILKNLNIISTGVLYRIIL. At 173-175 the chain is on the cytoplasmic side; that stretch reads KKK. A helical transmembrane segment spans residues 176–196; that stretch reads LSEIQWAAFILLCAGCTTAQL. At 197 to 211 the chain is on the lumenal side; the sequence is NPSSDHVLQTPIQGW. A helical transmembrane segment spans residues 212–232; the sequence is VMAIVMALLSGFAGVYTEAII. At 233 to 239 the chain is on the cytoplasmic side; that stretch reads KKRPSRN. A helical membrane pass occupies residues 240–260; the sequence is INVQNFWLYIFGMLFNLVAIC. The Lumenal segment spans residues 261–277; sequence VQDFDAVMNKGFFHGYS. A helical transmembrane segment spans residues 278-298; that stretch reads FITVLMILNHALSGIAVSMVM. Over 299–314 the chain is Cytoplasmic; sequence KYADNIVKVYSTSVAM. A helical transmembrane segment spans residues 315 to 335; it reads LLTAVVSVFLFGFHLSLAFFL. At 336 to 356 the chain is on the lumenal side; that stretch reads GSTVVSVSVYLHSVGKPQPQK.

This sequence belongs to the nucleotide-sugar transporter family. CMP-Sialate:CMP antiporter (TC 2.A.7.12) subfamily.

The protein localises to the golgi apparatus membrane. Sugar transporter involved in the transport of CMP-sialic acid from the cytoplasm into the Golgi. May transport important nucleotide sugars such as CMP-Kdo (2-keto-3-deoxy-D-manno-octulosonic acid) in physiological conditions. The sequence is that of CMP-sialic acid transporter 2 from Oryza sativa subsp. indica (Rice).